Consider the following 562-residue polypeptide: Protoporphyrinogen oxidase 1, chloroplastic (562 aa).

The transit peptide at 1-48 (MSAMALSSTMALSLPQSSMSLSHCRHNRITILIPSSSLRRRGGSSIRC) directs the protein to the chloroplast. Residues 88 to 93 (GGGISG), 115 to 116 (EA), and 137 to 140 (GPNS) each bind FAD. The segment at 274 to 302 (TLKTIQERKDNPKPPRDPRLPKPKGQTVG) is disordered. Basic and acidic residues predominate over residues 278–293 (IQERKDNPKPPRDPRL). FAD-binding positions include Val323 and 536-538 (VAL).

Belongs to the protoporphyrinogen/coproporphyrinogen oxidase family. Protoporphyrinogen oxidase subfamily. Requires FAD as cofactor.

It localises to the plastid. Its subcellular location is the chloroplast thylakoid membrane. It is found in the chloroplast inner membrane. The catalysed reaction is protoporphyrinogen IX + 3 O2 = protoporphyrin IX + 3 H2O2. Its pathway is porphyrin-containing compound metabolism; protoporphyrin-IX biosynthesis; protoporphyrin-IX from protoporphyrinogen-IX: step 1/1. It participates in porphyrin-containing compound metabolism; chlorophyll biosynthesis. In terms of biological role, catalyzes the 6-electron oxidation of protoporphyrinogen-IX to form protoporphyrin-IX. The protein is Protoporphyrinogen oxidase 1, chloroplastic of Spinacia oleracea (Spinach).